A 1111-amino-acid polypeptide reads, in one-letter code: Histone deacetylase 5 (1111 aa).

K35 participates in a covalent cross-link: Glycyl lysine isopeptide (Lys-Gly) (interchain with G-Cter in SUMO2). Disordered regions lie at residues G40–L63, R107–R136, and K187–L272. Residues D238 to A249 show a composition bias toward basic and acidic residues. S250 is subject to Phosphoserine; by AMPK, CaMK1, SIK1 and PKD/PRKD1. Positions K263–L272 are enriched in basic and acidic residues. At T283 the chain carries Phosphothreonine; by PKC. Residues T474 to S495 are disordered. The segment covering S485–S495 has biased composition (low complexity). Phosphoserine; by AMPK, CaMK1, SIK1 and PKD/PRKD1 is present on S489. K524 bears the N6-acetyllysine mark. Disordered regions lie at residues T527–S611 and L645–T666. Acidic residues predominate over residues S572–E610. 2 positions are modified to phosphoserine: S600 and S650. The segment at T671–Q1017 is histone deacetylase. Zn(2+) contacts are provided by C685, C687, H693, and C770. H822 is a catalytic residue. A Nuclear export signal motif is present at residues E1070–P1109. The tract at residues E1086–L1111 is disordered. A Phosphoserine modification is found at S1097.

This sequence belongs to the histone deacetylase family. HD type 2 subfamily. As to quaternary structure, interacts with AHRR, BAHD1, BCOR, HDAC7, HDAC9, CTBP1, MEF2C, NCOR2, NRIP1, PHB2 and a 14-3-3 chaperone protein. Interacts with BCL6, DDIT3/CHOP, GRK5, KDM5B and MYOCD. Interacts with EP300 in the presence of TFAP2C. Interacts with ANKRA2. Interacts with CUL7 (as part of the 3M complex); negatively regulated by ANKRA2. Interacts with ZBTB7B; the interaction allows the recruitment of HDAC4 on CD8 loci for deacetylation and possible inhibition of CD8 genes expression. Interacts with RARA. Post-translationally, phosphorylated by AMPK, CaMK1, SIK1 and PRKD1 at Ser-250 and Ser-489. The phosphorylation is required for the export to the cytoplasm and inhibition. Phosphorylated by the PKC kinases PKN1 and PKN2, impairing nuclear import. Phosphorylated by GRK5, leading to nuclear export of HDAC5 and allowing MEF2-mediated transcription. Ubiquitinated. Polyubiquitination however does not lead to its degradation.

It localises to the nucleus. Its subcellular location is the cytoplasm. The catalysed reaction is N(6)-acetyl-L-lysyl-[histone] + H2O = L-lysyl-[histone] + acetate. In terms of biological role, responsible for the deacetylation of lysine residues on the N-terminal part of the core histones (H2A, H2B, H3 and H4). Histone deacetylation gives a tag for epigenetic repression and plays an important role in transcriptional regulation, cell cycle progression and developmental events. Histone deacetylases act via the formation of large multiprotein complexes. Involved in muscle maturation by repressing transcription of myocyte enhancer MEF2C. During muscle differentiation, it shuttles into the cytoplasm, allowing the expression of myocyte enhancer factors. Serves as a corepressor of RARA and causes its deacetylation. In association with RARA, plays a role in the repression of microRNA-10a and thereby in the inflammatory response. The sequence is that of Histone deacetylase 5 (HDAC5) from Cricetulus griseus (Chinese hamster).